We begin with the raw amino-acid sequence, 166 residues long: Myosin regulatory light chain 2, ventricular/cardiac muscle isoform (166 aa).

Position 2 is a n,N,N-trimethylalanine (alanine 2). Serine 14 and serine 15 each carry phosphoserine; by MLCK. Serine 19 is subject to Phosphoserine. 3 consecutive EF-hand domains span residues 24–59, 94–129, and 130–165; these read TQIQ…LGRV, DPEE…QAER, and FSKE…GEEK. Ca(2+) is bound by residues aspartate 37, asparagine 39, aspartate 41, and aspartate 48. At threonine 52 the chain carries Phosphothreonine.

In terms of assembly, myosin is a hexamer of 2 heavy chains and 4 light chains. Interacts with MYOC. Post-translationally, N-terminus is methylated by METTL11A/NTM1. Phosphorylated by MYLK3 and MYLK2; promotes cardiac muscle contraction and function. Dephosphorylated by PPP1CB complexed to PPP1R12B. The phosphorylated form in adult is expressed as gradients across the heart from endocardium (low phosphorylation) to epicardium (high phosphorylation); regulates cardiac torsion and workload distribution. Abundantly expressed in both cardiac and slow skeletal muscle. In the adult heart, the phosphorylated form is highly expressed in epicardium and weakly in endocardium.

It is found in the cytoplasm. It localises to the myofibril. The protein resides in the sarcomere. Its subcellular location is the a band. Functionally, contractile protein that plays a role in heart development and function. Following phosphorylation, plays a role in cross-bridge cycling kinetics and cardiac muscle contraction by increasing myosin lever arm stiffness and promoting myosin head diffusion; as a consequence of the increase in maximum contraction force and calcium sensitivity of contraction force. These events altogether slow down myosin kinetics and prolong duty cycle resulting in accumulated myosins being cooperatively recruited to actin binding sites to sustain thin filament activation as a means to fine-tune myofilament calcium sensitivity to force. During cardiogenesis plays an early role in cardiac contractility by promoting cardiac myofibril assembly. In Mus musculus (Mouse), this protein is Myosin regulatory light chain 2, ventricular/cardiac muscle isoform.